A 1216-amino-acid chain; its full sequence is Apical endosomal glycoprotein (1216 aa).

Residues 1 to 22 (MPLSSHLLPALVLFLAGSSGWA) form the signal peptide. The Extracellular portion of the chain corresponds to 23–1151 (WVPNHCRSPG…SPGNTAAPGS (1129 aa)). Residues 26–53 (NHCRSPGQAVCNFVCDCRDCSDEAQCGY) form the LDL-receptor class A 1; truncated domain. The MAM 1 domain maps to 64-222 (FACDFEQDPC…DDLEFWDCGL (159 aa)). Asn203 is a glycosylation site (N-linked (GlcNAc...) asparagine). The LDL-receptor class A 2 domain maps to 228–266 (NCPPGHHHCQNKVCVEPQQLCDGEDNCGDLSDENPLTCG). Cystine bridges form between Cys229–Cys241, Cys236–Cys254, and Cys248–Cys265. Positions 269–425 (IATDFETGLG…DLILSDHCRP (157 aa)) constitute an MAM 2 domain. Residues 280 to 307 (WNRSEGWSRNHRAGGPERPSWPRRDHSR) form a disordered region. Asn281 and Asn339 each carry an N-linked (GlcNAc...) asparagine glycan. Positions 429–455 (VSTLQPLPPGPRAPAPQPLPPSSRLQD) are disordered. Residues 434 to 449 (PLPPGPRAPAPQPLPP) show a composition bias toward pro residues. The LDL-receptor class A 3 domain maps to 456–491 (SCKQGHLACGDLCVPPEQLCDFEEQCAGGEDEQACG). Intrachain disulfides connect Cys457-Cys468, Cys464-Cys481, and Cys475-Cys490. MAM domains are found at residues 491 to 644 (GTTD…DCSP), 654 to 809 (VSCN…PCWA), 811 to 969 (NYCS…PCPQ), and 971 to 1138 (GSCD…HCQQ). Residues Asn583 and Asn636 are each glycosylated (N-linked (GlcNAc...) asparagine). Asn835 carries an N-linked (GlcNAc...) asparagine glycan. The helical transmembrane segment at 1152-1172 (VPAVVGSALLLLMLLVLLGLG) threads the bilayer. Over 1173–1216 (GRRWLQKKGSCPFQSNTEATAPGFDNILFNADGVTLPASVTSDP) the chain is Cytoplasmic.

Its subcellular location is the membrane. Functionally, probably involved in the sorting and selective transport of receptors and ligands across polarized epithelia. The sequence is that of Apical endosomal glycoprotein from Homo sapiens (Human).